A 333-amino-acid polypeptide reads, in one-letter code: Flotillin-like protein FloA (333 aa).

The chain crosses the membrane as a helical span at residues Ile10 to Phe30.

The protein belongs to the flotillin-like FloA family. Homooligomerizes.

The protein localises to the cell membrane. It localises to the membrane raft. Its function is as follows. Found in functional membrane microdomains (FMM) that may be equivalent to eukaryotic membrane rafts. FMMs are highly dynamic and increase in number as cells age. Flotillins are thought to be important factors in membrane fluidity. This chain is Flotillin-like protein FloA, found in Bacteroides fragilis (strain ATCC 25285 / DSM 2151 / CCUG 4856 / JCM 11019 / LMG 10263 / NCTC 9343 / Onslow / VPI 2553 / EN-2).